The primary structure comprises 417 residues: MNKIIVNGGKSLKGEVNINSAKNSVLPIIAASILSGDKCIIENAPMLEDVFVISEVLKSISSEVDIDRDNNKIIIDTSNICNSEPCSELVKKLRASFLIMGPMISRFGNFKISLPGGCNIGTRPIDLHLKGLNALGADINIGYGYVEAKADKLKGNKIYLDFPSVGATENLMMAAVLAEGDTIIQNAAEEPEIEDLAKFLNSMGANIVGAGTDTINIIGVKDLKGVVHKPIYDRIEAGTFMTAAAITRSKIKLNGVNEGHLRPIIAKLTEIGVKIDTNGDSMIVDGNHQLKPVDIKTMPYPGFPTDMQAQTMALLTSIEGTSIVTETIFENRFMHATEMKRMGSNIKIDGRSAVIEGGNELTGCEVKATDLRAGAALILCGLVARGSTNVTDVYHIDRGYANIEKKLQALGAEIYRI.

Lys-22 to Asn-23 contacts phosphoenolpyruvate. A UDP-N-acetyl-alpha-D-glucosamine-binding site is contributed by Arg-94. The Proton donor role is filled by Cys-118. At Cys-118 the chain carries 2-(S-cysteinyl)pyruvic acid O-phosphothioketal. Residues Arg-123–Leu-127, Asp-306, and Ile-328 each bind UDP-N-acetyl-alpha-D-glucosamine.

This sequence belongs to the EPSP synthase family. MurA subfamily.

The protein resides in the cytoplasm. The enzyme catalyses phosphoenolpyruvate + UDP-N-acetyl-alpha-D-glucosamine = UDP-N-acetyl-3-O-(1-carboxyvinyl)-alpha-D-glucosamine + phosphate. It participates in cell wall biogenesis; peptidoglycan biosynthesis. Cell wall formation. Adds enolpyruvyl to UDP-N-acetylglucosamine. The protein is UDP-N-acetylglucosamine 1-carboxyvinyltransferase 2 of Clostridium tetani (strain Massachusetts / E88).